Here is a 177-residue protein sequence, read N- to C-terminus: Peptidyl-tRNA hydrolase (177 aa).

Position 14 (tyrosine 14) interacts with tRNA. Histidine 19 (proton acceptor) is an active-site residue. Positions 64, 66, and 112 each coordinate tRNA.

This sequence belongs to the PTH family. As to quaternary structure, monomer.

The protein resides in the cytoplasm. It carries out the reaction an N-acyl-L-alpha-aminoacyl-tRNA + H2O = an N-acyl-L-amino acid + a tRNA + H(+). In terms of biological role, hydrolyzes ribosome-free peptidyl-tRNAs (with 1 or more amino acids incorporated), which drop off the ribosome during protein synthesis, or as a result of ribosome stalling. Its function is as follows. Catalyzes the release of premature peptidyl moieties from peptidyl-tRNA molecules trapped in stalled 50S ribosomal subunits, and thus maintains levels of free tRNAs and 50S ribosomes. This Latilactobacillus sakei (Lactobacillus sakei) protein is Peptidyl-tRNA hydrolase.